Here is a 357-residue protein sequence, read N- to C-terminus: MADAATITKLEEGFKKLEAATDCKSLLKKYLTKSVFDQLKAKKTSLGATLLDVIQSGVENLDSGVGVYAPDAEAYTLFSPLFDPIIEDYHKGFKQTDKHPNKDFGDVNQFVNVDPDGKFVISTRVRCGRSMEGYPFNPCLTEAQYKEMESKVSSTLSNLEGELKGTYHALTGMTKDVQQKLIDDHFLFKEGDRFLQAANACRYWPTGRGIYHNDNKTFLVWCNEEDHLRIISMQMGGDLGQVYRRLVTAVNDIEKRVPFSHHDRLGFLTFCPTNLGTTVRASVHIKLPKLAANRDKLEEVAGKYSLQVRGTRGEHTEAEGGVYDISNKRRMGLTEFQAVKEMQDGILELIKIEKEMQ.

A2 is subject to N-acetylalanine. The Phosphagen kinase N-terminal domain maps to 9–91 (KLEEGFKKLE…FDPIIEDYHK (83 aa)). Position 64 to 68 (64 to 68 (GVGVY)) interacts with L-arginine. The Phosphagen kinase C-terminal domain occupies 119 to 356 (FVISTRVRCG…LELIKIEKEM (238 aa)). ATP is bound by residues 122–126 (STRVR) and H185. L-arginine is bound at residue E225. Position 229 (R229) interacts with ATP. L-arginine is bound at residue C271. Residues 280–284 (RASVH) and 309–314 (RGTRGE) each bind ATP. E314 is an L-arginine binding site.

Belongs to the ATP:guanido phosphotransferase family.

The enzyme catalyses L-arginine + ATP = N(omega)-phospho-L-arginine + ADP + H(+). The sequence is that of Arginine kinase from Carcinus maenas (Common shore crab).